The sequence spans 444 residues: 23S rRNA (uracil(1939)-C(5))-methyltransferase RlmD (444 aa).

One can recognise a TRAM domain in the interval 5-67 (RNRLDRTPFQ…RHFDEAKTVE (63 aa)). Residues C80, C86, C89, and C168 each contribute to the [4Fe-4S] cluster site. Q276, F305, N310, E326, D353, and D374 together coordinate S-adenosyl-L-methionine. The active-site Nucleophile is C400.

Belongs to the class I-like SAM-binding methyltransferase superfamily. RNA M5U methyltransferase family. RlmD subfamily.

The catalysed reaction is uridine(1939) in 23S rRNA + S-adenosyl-L-methionine = 5-methyluridine(1939) in 23S rRNA + S-adenosyl-L-homocysteine + H(+). Its function is as follows. Catalyzes the formation of 5-methyl-uridine at position 1939 (m5U1939) in 23S rRNA. The polypeptide is 23S rRNA (uracil(1939)-C(5))-methyltransferase RlmD (Xanthomonas euvesicatoria pv. vesicatoria (strain 85-10) (Xanthomonas campestris pv. vesicatoria)).